A 452-amino-acid polypeptide reads, in one-letter code: Peptidase M20 domain-containing protein SMAC_03666.2 (452 aa).

The N-terminal stretch at 1-28 (MKATSNLLLLWGTSLLSPSSAFVIDNHH) is a signal peptide. The N-linked (GlcNAc...) asparagine glycan is linked to Asn-140. Asp-186 is a binding site for Zn(2+). Glu-220 functions as the Proton acceptor in the catalytic mechanism. Residue Glu-221 coordinates Zn(2+). Asn-315 carries N-linked (GlcNAc...) asparagine glycosylation.

The protein belongs to the peptidase M20A family. It depends on Zn(2+) as a cofactor.

It is found in the secreted. This is Peptidase M20 domain-containing protein SMAC_03666.2 from Sordaria macrospora (strain ATCC MYA-333 / DSM 997 / K(L3346) / K-hell).